Reading from the N-terminus, the 102-residue chain is Large ribosomal subunit protein uL24 (102 aa).

The protein belongs to the universal ribosomal protein uL24 family. Part of the 50S ribosomal subunit.

In terms of biological role, one of two assembly initiator proteins, it binds directly to the 5'-end of the 23S rRNA, where it nucleates assembly of the 50S subunit. One of the proteins that surrounds the polypeptide exit tunnel on the outside of the subunit. The chain is Large ribosomal subunit protein uL24 from Allorhizobium ampelinum (strain ATCC BAA-846 / DSM 112012 / S4) (Agrobacterium vitis (strain S4)).